A 366-amino-acid polypeptide reads, in one-letter code: MADNSSDYRALFLNDVPMMDARAPVEFSKGAFPGVINLPLMNDIERQKVGTCYKQHGQDAAIQLGHQLVCGQVKDERVNAWIEFAKANPDGYLYCFRGGLRSQTVQRWLKDAGVDYPRVLGGYKAMRTFLLDTLHEAVSECSIVVLGGMTGTGKTEVLTQLRNSVDLEGIANHRGSSFGKRATGQPAQIDFENRLAIDLLKKRAAGIEQFVVEDESRLVGSCNVPLELHQAMQGCPMVWLEDSFENRVERILEDYVINLCAEFITVKGEEQGFGLFAERLLQSLNNIHKRLGGERHQRLSDLMQAALEEQQRSGAVDLHRGWIEGLLGEYYDPMYAYQREHKAARIEFAGDQTQVLAYLRERSEQR.

The Rhodanese domain occupies 12-135 (FLNDVPMMDA…MRTFLLDTLH (124 aa)). The S-selanylcysteine intermediate role is filled by C95.

This sequence belongs to the SelU family. Monomer.

It catalyses the reaction 5-methylaminomethyl-2-thiouridine(34) in tRNA + selenophosphate + (2E)-geranyl diphosphate + H2O + H(+) = 5-methylaminomethyl-2-selenouridine(34) in tRNA + (2E)-thiogeraniol + phosphate + diphosphate. The enzyme catalyses 5-methylaminomethyl-2-thiouridine(34) in tRNA + (2E)-geranyl diphosphate = 5-methylaminomethyl-S-(2E)-geranyl-thiouridine(34) in tRNA + diphosphate. The catalysed reaction is 5-methylaminomethyl-S-(2E)-geranyl-thiouridine(34) in tRNA + selenophosphate + H(+) = 5-methylaminomethyl-2-(Se-phospho)selenouridine(34) in tRNA + (2E)-thiogeraniol. It carries out the reaction 5-methylaminomethyl-2-(Se-phospho)selenouridine(34) in tRNA + H2O = 5-methylaminomethyl-2-selenouridine(34) in tRNA + phosphate. In terms of biological role, involved in the post-transcriptional modification of the uridine at the wobble position (U34) of tRNA(Lys), tRNA(Glu) and tRNA(Gln). Catalyzes the conversion of 2-thiouridine (S2U-RNA) to 2-selenouridine (Se2U-RNA). Acts in a two-step process involving geranylation of 2-thiouridine (S2U) to S-geranyl-2-thiouridine (geS2U) and subsequent selenation of the latter derivative to 2-selenouridine (Se2U) in the tRNA chain. The protein is tRNA 2-selenouridine synthase of Pseudomonas syringae pv. syringae (strain B728a).